We begin with the raw amino-acid sequence, 447 residues long: Exodeoxyribonuclease 7 large subunit (447 aa).

Belongs to the XseA family. As to quaternary structure, heterooligomer composed of large and small subunits.

Its subcellular location is the cytoplasm. It catalyses the reaction Exonucleolytic cleavage in either 5'- to 3'- or 3'- to 5'-direction to yield nucleoside 5'-phosphates.. In terms of biological role, bidirectionally degrades single-stranded DNA into large acid-insoluble oligonucleotides, which are then degraded further into small acid-soluble oligonucleotides. The protein is Exodeoxyribonuclease 7 large subunit of Pediococcus pentosaceus (strain ATCC 25745 / CCUG 21536 / LMG 10740 / 183-1w).